Consider the following 684-residue polypeptide: Threonine--tRNA ligase (684 aa).

The TGS domain occupies 1–66 (MSTAASPAPA…DADVEVVPVP (66 aa)). The tract at residues 261-567 (DHRKLGVELD…LTEHYAGAFP (307 aa)) is catalytic. Zn(2+) is bound by residues Cys366, His417, and His544.

Belongs to the class-II aminoacyl-tRNA synthetase family. In terms of assembly, homodimer. The cofactor is Zn(2+).

The protein resides in the cytoplasm. The catalysed reaction is tRNA(Thr) + L-threonine + ATP = L-threonyl-tRNA(Thr) + AMP + diphosphate + H(+). Functionally, catalyzes the attachment of threonine to tRNA(Thr) in a two-step reaction: L-threonine is first activated by ATP to form Thr-AMP and then transferred to the acceptor end of tRNA(Thr). Also edits incorrectly charged L-seryl-tRNA(Thr). This chain is Threonine--tRNA ligase, found in Mycobacterium sp. (strain KMS).